The primary structure comprises 183 residues: Type II secretion system protein H (183 aa).

Residues 1–5 constitute a propeptide, leader sequence; that stretch reads MRQRG. F6 carries the N-methylphenylalanine modification. The chain crosses the membrane as a helical span at residues 6–26; it reads FTVLEMMLVVLLMGSAASLVI.

Type II secretion is composed of four main components: the outer membrane complex, the inner membrane complex, the cytoplasmic secretion ATPase and the periplasm-spanning pseudopilus. Interacts with core component PulG. Interacts with PulM. In terms of processing, cleaved by prepilin peptidase. Post-translationally, methylated by prepilin peptidase at the amino group of the N-terminal phenylalanine once the leader sequence is cleaved by prepilin peptidase.

The protein localises to the cell inner membrane. In terms of biological role, component of the type II secretion system required for the energy-dependent secretion of extracellular factors such as proteases and toxins from the periplasm. Part of the pseudopilus tip complex that is critical for the recognition and binding of secretion substrates. The sequence is that of Type II secretion system protein H (pulH) from Klebsiella michiganensis (strain ATCC 8724 / DSM 4798 / JCM 20051 / NBRC 3318 / NRRL B-199 / KCTC 1686 / BUCSAV 143 / CCM 1901).